A 427-amino-acid polypeptide reads, in one-letter code: UPF0761 membrane protein Plut_1323 (427 aa).

Transmembrane regions (helical) follow at residues 51–71, 105–125, 147–167, 188–208, 221–241, and 251–271; these read LLSI…FAVF, TFTM…VLIS, FTLY…SLAA, LLSL…YLLV, GALV…FYVA, and GALS…VVVL.

It belongs to the UPF0761 family.

Its subcellular location is the cell inner membrane. The protein is UPF0761 membrane protein Plut_1323 of Chlorobium luteolum (strain DSM 273 / BCRC 81028 / 2530) (Pelodictyon luteolum).